A 331-amino-acid chain; its full sequence is MSTKEKLISHVMKEEPVGSRNKVTVVGVGMVGMASAISILLKDLCDELAMVDVMEDKLKGEVMDLQHGSLFLKTKIVGDKDYSVTANSKVVVVTAGARQQEGESRLNLVQRNVNIFKFIIPNIVKYSPNCILMVVSNPVDILTYVAWKLSGFPRHRVIGSGTNLDSARFRHLIGEKLHLHPSSCHAWIVGEHGDSSVPVWSGVNVAGVSLQGLNPQMGTEGDGEDWKAIHKEVVDGAYEVIKLKGYTSWAIGMSVADLVESIIKNMHKVHPVSTLVQGMHGVKDEVFLSVPCVLGNSGLTDVIHMTLKAEEEKQVQKSAETLWGVQKELIL.

NAD(+) contacts are provided by residues 29 to 57 and Arg-98; that span reads GMVG…MEDK. Arg-105, Asn-137, and Arg-168 together coordinate substrate. Asn-137 contacts NAD(+). Catalysis depends on His-192, which acts as the Proton acceptor. A substrate-binding site is contributed by Thr-247.

Belongs to the LDH/MDH superfamily. LDH family. In terms of assembly, homotetramer.

It localises to the cytoplasm. The catalysed reaction is (S)-lactate + NAD(+) = pyruvate + NADH + H(+). It functions in the pathway fermentation; pyruvate fermentation to lactate; (S)-lactate from pyruvate: step 1/1. Interconverts simultaneously and stereospecifically pyruvate and lactate with concomitant interconversion of NADH and NAD(+). This is L-lactate dehydrogenase A chain (ldha) from Gobionotothen gibberifrons (Humped rockcod).